Consider the following 81-residue polypeptide: Large ribosomal subunit protein bL31B (81 aa).

Belongs to the bacterial ribosomal protein bL31 family. Type B subfamily. In terms of assembly, part of the 50S ribosomal subunit.

The sequence is that of Large ribosomal subunit protein bL31B from Bacillus licheniformis (strain ATCC 14580 / DSM 13 / JCM 2505 / CCUG 7422 / NBRC 12200 / NCIMB 9375 / NCTC 10341 / NRRL NRS-1264 / Gibson 46).